The sequence spans 400 residues: Acetate kinase (400 aa).

N10 is a binding site for Mg(2+). Residue K17 coordinates ATP. A substrate-binding site is contributed by R91. D150 serves as the catalytic Proton donor/acceptor. ATP-binding positions include 210–214 (HLGGG), 285–287 (DFR), and 333–337 (GIGEN). Residue E387 coordinates Mg(2+).

This sequence belongs to the acetokinase family. Homodimer. The cofactor is Mg(2+). Requires Mn(2+) as cofactor.

It is found in the cytoplasm. The enzyme catalyses acetate + ATP = acetyl phosphate + ADP. Its pathway is metabolic intermediate biosynthesis; acetyl-CoA biosynthesis; acetyl-CoA from acetate: step 1/2. Functionally, catalyzes the formation of acetyl phosphate from acetate and ATP. Can also catalyze the reverse reaction. This chain is Acetate kinase, found in Buchnera aphidicola subsp. Baizongia pistaciae (strain Bp).